The sequence spans 253 residues: Prepilin leader peptidase/N-methyltransferase (253 aa).

Residues V4–I24 traverse the membrane as a helical segment. Residues C48, C51, C73, and C76 each contribute to the Zn(2+) site. 6 helical membrane passes run I80–W100, V106–F126, M129–Q149, I159–F179, T198–I218, and C230–I250.

The protein belongs to the peptidase A24 family. Zn(2+) serves as cofactor.

It is found in the cell inner membrane. The enzyme catalyses Typically cleaves a -Gly-|-Phe- bond to release an N-terminal, basic peptide of 5-8 residues from type IV prepilin, and then N-methylates the new N-terminal amino group, the methyl donor being S-adenosyl-L-methionine.. Plays an essential role in type IV pili and type II pseudopili formation by proteolytically removing the leader sequence from substrate proteins and subsequently monomethylating the alpha-amino group of the newly exposed N-terminal phenylalanine. In Vibrio cholerae serotype O1 (strain ATCC 39315 / El Tor Inaba N16961), this protein is Prepilin leader peptidase/N-methyltransferase (tcpJ).